A 144-amino-acid chain; its full sequence is Prefoldin subunit alpha (144 aa).

This sequence belongs to the prefoldin subunit alpha family. In terms of assembly, heterohexamer of two alpha and four beta subunits.

It is found in the cytoplasm. Functionally, molecular chaperone capable of stabilizing a range of proteins. Seems to fulfill an ATP-independent, HSP70-like function in archaeal de novo protein folding. The polypeptide is Prefoldin subunit alpha (Methanosarcina barkeri (strain Fusaro / DSM 804)).